The chain runs to 489 residues: 3-octaprenyl-4-hydroxybenzoate carboxy-lyase (489 aa).

Asn172 is a Mn(2+) binding site. Prenylated FMN contacts are provided by residues Ile175–Arg177, Arg189–Leu191, and Arg194–Gly195. Glu238 provides a ligand contact to Mn(2+). Asp287 serves as the catalytic Proton donor.

Belongs to the UbiD family. Homohexamer. Prenylated FMN serves as cofactor. The cofactor is Mn(2+).

It is found in the cell membrane. The enzyme catalyses a 4-hydroxy-3-(all-trans-polyprenyl)benzoate + H(+) = a 2-(all-trans-polyprenyl)phenol + CO2. It functions in the pathway cofactor biosynthesis; ubiquinone biosynthesis. In terms of biological role, catalyzes the decarboxylation of 3-octaprenyl-4-hydroxy benzoate to 2-octaprenylphenol, an intermediate step in ubiquinone biosynthesis. The polypeptide is 3-octaprenyl-4-hydroxybenzoate carboxy-lyase (Glaesserella parasuis serovar 5 (strain SH0165) (Haemophilus parasuis)).